The primary structure comprises 976 residues: Ephrin type-A receptor 1 (976 aa).

An N-terminal signal peptide occupies residues M1 to A25. At K26–E547 the chain is on the extracellular side. Residues E27–N209 enclose the Eph LBD domain. Fibronectin type-III domains follow at residues P332 to A445 and S447 to P538. N414 carries an N-linked (GlcNAc...) asparagine glycan. Residues I548–F568 form a helical membrane-spanning segment. The Cytoplasmic segment spans residues R569–D976. Phosphotyrosine; by autocatalysis occurs at positions 599 and 605. One can recognise a Protein kinase domain in the interval L624–L884. Residues I630–V638 and K656 each bind ATP. D749 serves as the catalytic Proton acceptor. At Y781 the chain carries Phosphotyrosine; by autocatalysis. Residues S906 and S910 each carry the phosphoserine modification. The region spanning I913–D976 is the SAM domain. Y930 carries the phosphotyrosine; by autocatalysis modification. Positions F974–D976 match the PDZ-binding motif.

The protein belongs to the protein kinase superfamily. Tyr protein kinase family. Ephrin receptor subfamily. As to quaternary structure, homodimer. Forms a signaling complex with LCK; PTK2B/PYK2 and PI3-kinase upon activation by EFNA1; regulates T-lymphocytes migration. Interacts (via SAM domain) with ILK (via ANK repeats); stimulated by EFNA1 but independent of the kinase activity of EPHA1. Interacts (kinase activity-dependent) with PTK2/FAK1. Post-translationally, phosphorylated. Autophosphorylation is stimulated by its ligand EFNA1. In terms of processing, ubiquitinated. In terms of tissue distribution, overexpressed in several carcinomas.

It is found in the cell membrane. The enzyme catalyses L-tyrosyl-[protein] + ATP = O-phospho-L-tyrosyl-[protein] + ADP + H(+). In terms of biological role, receptor tyrosine kinase which binds promiscuously membrane-bound ephrin-A family ligands residing on adjacent cells, leading to contact-dependent bidirectional signaling into neighboring cells. The signaling pathway downstream of the receptor is referred to as forward signaling while the signaling pathway downstream of the ephrin ligand is referred to as reverse signaling. Binds with a low affinity EFNA3 and EFNA4 and with a high affinity to EFNA1 which most probably constitutes its cognate/functional ligand. Upon activation by EFNA1 induces cell attachment to the extracellular matrix inhibiting cell spreading and motility through regulation of ILK and downstream RHOA and RAC. Also plays a role in angiogenesis and regulates cell proliferation. May play a role in apoptosis. The sequence is that of Ephrin type-A receptor 1 (EPHA1) from Homo sapiens (Human).